We begin with the raw amino-acid sequence, 323 residues long: Lipoyl synthase (323 aa).

7 residues coordinate [4Fe-4S] cluster: C65, C70, C76, C91, C95, C98, and S304. The region spanning 77-293 is the Radical SAM core domain; sequence FNNGTATFMI…KKEALSIGFT (217 aa).

The protein belongs to the radical SAM superfamily. Lipoyl synthase family. [4Fe-4S] cluster serves as cofactor.

The protein localises to the cytoplasm. The enzyme catalyses [[Fe-S] cluster scaffold protein carrying a second [4Fe-4S](2+) cluster] + N(6)-octanoyl-L-lysyl-[protein] + 2 oxidized [2Fe-2S]-[ferredoxin] + 2 S-adenosyl-L-methionine + 4 H(+) = [[Fe-S] cluster scaffold protein] + N(6)-[(R)-dihydrolipoyl]-L-lysyl-[protein] + 4 Fe(3+) + 2 hydrogen sulfide + 2 5'-deoxyadenosine + 2 L-methionine + 2 reduced [2Fe-2S]-[ferredoxin]. It functions in the pathway protein modification; protein lipoylation via endogenous pathway; protein N(6)-(lipoyl)lysine from octanoyl-[acyl-carrier-protein]: step 2/2. Its function is as follows. Catalyzes the radical-mediated insertion of two sulfur atoms into the C-6 and C-8 positions of the octanoyl moiety bound to the lipoyl domains of lipoate-dependent enzymes, thereby converting the octanoylated domains into lipoylated derivatives. This Buchnera aphidicola subsp. Acyrthosiphon pisum (strain APS) (Acyrthosiphon pisum symbiotic bacterium) protein is Lipoyl synthase.